Here is a 163-residue protein sequence, read N- to C-terminus: Allophycocyanin alpha-B chain (163 aa).

N4-methylasparagine is present on N71. Residue C81 participates in (2R,3E)-phycocyanobilin binding.

It belongs to the phycobiliprotein family. In terms of processing, contains one covalently linked bilin chromophore.

It localises to the plastid. The protein resides in the chloroplast thylakoid membrane. Functionally, allophycocyanin is a photosynthetic bile pigment-protein complex with maximum absorption at approximately 650 nanometers. This is Allophycocyanin alpha-B chain (apcD) from Cyanidium caldarium (Red alga).